We begin with the raw amino-acid sequence, 156 residues long: Ribosomal RNA large subunit methyltransferase H (156 aa).

S-adenosyl-L-methionine-binding positions include Leu-73, Gly-104, and 123–128; that span reads VSSLTL.

This sequence belongs to the RNA methyltransferase RlmH family. Homodimer.

The protein resides in the cytoplasm. The catalysed reaction is pseudouridine(1915) in 23S rRNA + S-adenosyl-L-methionine = N(3)-methylpseudouridine(1915) in 23S rRNA + S-adenosyl-L-homocysteine + H(+). Functionally, specifically methylates the pseudouridine at position 1915 (m3Psi1915) in 23S rRNA. The chain is Ribosomal RNA large subunit methyltransferase H from Burkholderia mallei (strain NCTC 10247).